Consider the following 121-residue polypeptide: Large ribosomal subunit protein bL19 (121 aa).

Belongs to the bacterial ribosomal protein bL19 family.

Functionally, this protein is located at the 30S-50S ribosomal subunit interface and may play a role in the structure and function of the aminoacyl-tRNA binding site. The sequence is that of Large ribosomal subunit protein bL19 from Chlorobium phaeobacteroides (strain BS1).